The primary structure comprises 482 residues: D-inositol 3-phosphate glycosyltransferase (482 aa).

Residue His63 participates in 1D-myo-inositol 3-phosphate binding. Residues 69 to 70 and Gly77 each bind UDP-N-acetyl-alpha-D-glucosamine; that span reads QP. Residues 74–79, Lys132, Tyr165, Thr189, and Arg209 contribute to the 1D-myo-inositol 3-phosphate site; that span reads DAGGMN. Residues Arg289, Lys294, and Gln355 each coordinate UDP-N-acetyl-alpha-D-glucosamine. Mg(2+) contacts are provided by Tyr364, Arg365, and Ala367. UDP-N-acetyl-alpha-D-glucosamine is bound by residues Glu377 and Glu385. Mg(2+) is bound at residue Thr391.

It belongs to the glycosyltransferase group 1 family. MshA subfamily. As to quaternary structure, homodimer.

The catalysed reaction is 1D-myo-inositol 3-phosphate + UDP-N-acetyl-alpha-D-glucosamine = 1D-myo-inositol 2-acetamido-2-deoxy-alpha-D-glucopyranoside 3-phosphate + UDP + H(+). In terms of biological role, catalyzes the transfer of a N-acetyl-glucosamine moiety to 1D-myo-inositol 3-phosphate to produce 1D-myo-inositol 2-acetamido-2-deoxy-glucopyranoside 3-phosphate in the mycothiol biosynthesis pathway. The chain is D-inositol 3-phosphate glycosyltransferase from Salinispora tropica (strain ATCC BAA-916 / DSM 44818 / JCM 13857 / NBRC 105044 / CNB-440).